A 509-amino-acid chain; its full sequence is MTEKILILDFGSQYTQLIARRVRELNVYCEIHPYNKAPQIDGTVKGVILSGSPCSVREENAPDIDLSLYREKLPLLGVCYGAQLIAHKSGGTVQPSSIREYGRARLNNVHTSDDLFKEIVPDSQVWMSHGDTIVEIPSNFEILSSTETVRVAAYKVKGEDTFGIQFHPEVTHSLQGKELLRNFVVHICGCSQDWTPDAFVETTISELKAKIGTDKVVLGLSGGVDSSVAAVLIHKAIGPNLTCIFVDNGLLRKNEYEEVLNSYKHMGLNVIGVDAKKQFYKSLEGLSDPEAKRKAIGKEFIEVFDQESHKIADVKWLGQGTIYPDIIESVSVKGPSATIKSHHNVGGLPEKMKLKIVEPLNTLFKDEVRRVGKTLGIDDIILKRHPFPGPGLAIRILGDITAEKVAVLQEVDYIFISRLKEKGLYDQVWQAGAILLPVKSVGVMGDERTYENVVALRAVSSMDGMTADWIHLPYDFLADISNEIINRVKGVNRVVYDISSKPPATIEWE.

Positions 4–193 (KILILDFGSQ…VVHICGCSQD (190 aa)) constitute a Glutamine amidotransferase type-1 domain. C79 serves as the catalytic Nucleophile. Active-site residues include H167 and E169. Residues 194–384 (WTPDAFVETT…LGIDDIILKR (191 aa)) form the GMPS ATP-PPase domain. ATP is bound at residue 221–227 (SGGVDSS).

As to quaternary structure, homodimer.

The enzyme catalyses XMP + L-glutamine + ATP + H2O = GMP + L-glutamate + AMP + diphosphate + 2 H(+). It functions in the pathway purine metabolism; GMP biosynthesis; GMP from XMP (L-Gln route): step 1/1. Catalyzes the synthesis of GMP from XMP. The chain is GMP synthase [glutamine-hydrolyzing] from Cytophaga hutchinsonii (strain ATCC 33406 / DSM 1761 / CIP 103989 / NBRC 15051 / NCIMB 9469 / D465).